The primary structure comprises 622 residues: Sodium/potassium/calcium exchanger 4 (622 aa).

The N-terminal stretch at 1–38 is a signal peptide; it reads MALRGTLRPLKVRRRREMLPQQVGFVCAVLALVCCASG. Residues 39 to 97 lie on the Extracellular side of the membrane; that stretch reads LFGSLGHKTASASKRVLPDTWRNRKLMAPVNGTQTAKNCTDPAIHEFPTDLFSNKERQH. Residues Asn-69 and Asn-76 are each glycosylated (N-linked (GlcNAc...) asparagine). The helical transmembrane segment at 98 to 118 threads the bilayer; it reads GAVLLHILGALYMFYALAIVC. Topologically, residues 119-142 are cytoplasmic; that stretch reads DDFFVPSLEKICERLHLSEDVAGA. The stretch at 139–179 is one Alpha-1 repeat; sequence VAGATFMAAGSSTPELFASVIGVFITHGDVGVGTIVGSAVF. Residues 143-163 form a helical membrane-spanning segment; sequence TFMAAGSSTPELFASVIGVFI. At 164–172 the chain is on the extracellular side; the sequence is THGDVGVGT. The helical transmembrane segment at 173–193 threads the bilayer; the sequence is IVGSAVFNILCIIGVCGLFAG. Topologically, residues 194-200 are cytoplasmic; the sequence is QVVRLTW. The helical transmembrane segment at 201-221 threads the bilayer; that stretch reads WAVCRDSVYYTISVIVLIVFI. Over 222–224 the chain is Extracellular; sequence YDE. The helical transmembrane segment at 225 to 245 threads the bilayer; the sequence is QIVWWEGLVLIILYVFYILIM. The Cytoplasmic segment spans residues 246–457; the sequence is KYNVKMQAFF…RWEKFFMVTF (212 aa). A disordered region spans residues 358–410; that stretch reads ANGVSSKPLQNGRHENIENGNVPVENPEDPQQNQEQQPPPQPPPPEPEPVEAD. A compositionally biased stretch (low complexity) spans 380-393; sequence PVENPEDPQQNQEQ. Over residues 394 to 404 the composition is skewed to pro residues; that stretch reads QPPPQPPPPEP. Residues 458–478 traverse the membrane as a helical segment; that stretch reads ITATLWIAVFSYIMVWLVTII. A topological domain (extracellular) is located at residue Gly-479. A helical membrane pass occupies residues 480–500; sequence YTLGIPDVIMGITFLAAGTSV. The Alpha-2 repeat unit spans residues 495 to 526; that stretch reads AAGTSVPDCMASLIVARQGLGDMAVSNTIGSN. At 501 to 526 the chain is on the cytoplasmic side; that stretch reads PDCMASLIVARQGLGDMAVSNTIGSN. The chain crosses the membrane as a helical span at residues 527-547; it reads VFDILVGLGVPWGLQTMVVNY. The Extracellular portion of the chain corresponds to 548–557; the sequence is GSTVKINSRG. The chain crosses the membrane as a helical span at residues 558–578; it reads LVYSVVLLLGSVALTVLGIHL. Over 579 to 586 the chain is Cytoplasmic; that stretch reads NKWRLDRK. Residues 587–607 form a helical membrane-spanning segment; that stretch reads LGVYVLVLYAIFLCFSIMIEF. The Extracellular segment spans residues 608–622; the sequence is NVFTFVNLPMCREDD.

The protein belongs to the Ca(2+):cation antiporter (CaCA) (TC 2.A.19) family. SLC24A subfamily. In terms of tissue distribution, expressed abundantly in all regions of the brain, aorta, lung and thymus. Expressed at lower levels in the stomach and intestine.

It is found in the cell membrane. The protein resides in the cytoplasm. It carries out the reaction Ca(2+)(out) + K(+)(out) + 4 Na(+)(in) = Ca(2+)(in) + K(+)(in) + 4 Na(+)(out). Calcium, potassium:sodium antiporter that transports 1 Ca(2+) and 1 K(+) in exchange for 4 Na(+). Controls the rapid response termination and proper regulation of adaptation in olfactory sensory neurons (OSNs) which subsequently influences how odor information is encoded and perceived. May play a role in calcium transport during amelogenesis. This Homo sapiens (Human) protein is Sodium/potassium/calcium exchanger 4.